The following is a 90-amino-acid chain: Probable Fe(2+)-trafficking protein (90 aa).

Belongs to the Fe(2+)-trafficking protein family.

Its function is as follows. Could be a mediator in iron transactions between iron acquisition and iron-requiring processes, such as synthesis and/or repair of Fe-S clusters in biosynthetic enzymes. This chain is Probable Fe(2+)-trafficking protein, found in Halorhodospira halophila (strain DSM 244 / SL1) (Ectothiorhodospira halophila (strain DSM 244 / SL1)).